A 957-amino-acid chain; its full sequence is MTQTLSQLENRGAFIERHIGPDAVQQQEMLNAVGAESLNALTGQIVPKDIQLATPPQVGEAATEYAALAELKAIAGRNKRFTSYIGMGYTAVQLPPVILRNMLENPGWYTAYTPYQPEVSQGRLEALLNFQQVTLDLTGLDMASASLLDEATAAAEAMAMAKRVSKLKNANRFFVASDVHPQTLDVVRTRAETFGFDVIVDDAAKALDHQDVFGVLLQQVGSTGEIHDYSALISELKARKVVVSVAADFMALVLLTAPGKQGADIVFGSAQRFGVPMGYGGPHAAFFAAKDEFKRSMPGRIIGVSKDAAGNTALRMAMQTREQHIRREKANSNICTSQVLLANIASLYAVYHGPVGLKRIANRIHRLTDILAAGLQQKGLKLRHAHYFDTLCVEVADKAAVLARAEAAEINLRSDIHNAVGITLDETTTRENVAQLFNVLLGDSHGLNIETLDKDVALDSRSIQQSMLRDDAILTHPVFNRYHSETEMMRYMHSLERKDLALNQAMIPLGSCTMKLNAAAEMIPITWPEFAELHPFCPPEQAEGYHQMISQLSDWLVKLTGYDAVCMQPNSGAQGEYAGLLAIRHYHESRNEGHRDICLIPASAHGTNPASAHMAGMQVVVVACDKNGNIDLDDLRAKAEQHAANLSCIMVTYPSTHGVYEETIREVCEVVHQFGGQVYLDGANMNAQVGITSPGFIGADVSHLNLHKTFCIPHGGGGPGMGPIGVKAHLAPFVPGHSVVQIEGMLTRQGAVSAAPFGSASILPISWMYIRMMGAEGLKQASQVAILNANYIASRLKDAYPVLYTGRDGRVAHECILDIRPLKEETGISELDIAKRLIDYGFHAPTMSFPVAGTLMVEPTESEGKAELDRFIDAMLAIRAEIDQVKAGVWPQEDNPLVNAPHIQSELVAEWAHPYSREVAVFPAGVADKYWPTVKRLDDVYGDRNLFCSCVPISDYQ.

Lysine 708 carries the post-translational modification N6-(pyridoxal phosphate)lysine.

This sequence belongs to the GcvP family. As to quaternary structure, the glycine cleavage system is composed of four proteins: P, T, L and H. Pyridoxal 5'-phosphate is required as a cofactor.

It carries out the reaction N(6)-[(R)-lipoyl]-L-lysyl-[glycine-cleavage complex H protein] + glycine + H(+) = N(6)-[(R)-S(8)-aminomethyldihydrolipoyl]-L-lysyl-[glycine-cleavage complex H protein] + CO2. The glycine cleavage system catalyzes the degradation of glycine. The P protein binds the alpha-amino group of glycine through its pyridoxal phosphate cofactor; CO(2) is released and the remaining methylamine moiety is then transferred to the lipoamide cofactor of the H protein. The sequence is that of Glycine dehydrogenase (decarboxylating) from Salmonella newport (strain SL254).